A 283-amino-acid chain; its full sequence is Protein-S-isoprenylcysteine O-methyltransferase (283 aa).

Residues Met1–Leu15 are Cytoplasmic-facing. A helical membrane pass occupies residues Ser16–Leu32. Topologically, residues Thr33–Arg40 are lumenal. A helical transmembrane segment spans residues Thr41–Tyr58. Over Arg59 to Arg68 the chain is Cytoplasmic. Residues Ala69 to Gln86 traverse the membrane as a helical segment. The Lumenal portion of the chain corresponds to Ser87 to His91. A helical membrane pass occupies residues Phe92 to Ala111. The Cytoplasmic portion of the chain corresponds to Val112–Glu130. The helical transmembrane segment at Tyr131–Phe148 threads the bilayer. Over Trp149 to Lys153 the chain is Lumenal. The helical transmembrane segment at Gln154–Arg173 threads the bilayer. Residues Lys174 to Ser211 are Cytoplasmic-facing. S-adenosyl-L-methionine contacts are provided by residues Gln189, His196–Val199, Tyr204, and His209–Tyr212. The chain crosses the membrane as a helical span at residues Tyr212 to Cys227. A topological domain (lumenal) is located at residue Asn228. Residues Pro229 to Phe243 form a helical membrane-spanning segment. Residues Arg244–Leu283 are Cytoplasmic-facing. Arg246 is a substrate binding site. Residue Glu250 participates in S-adenosyl-L-methionine binding.

Belongs to the class VI-like SAM-binding methyltransferase superfamily. Isoprenylcysteine carboxyl methyltransferase family. In terms of tissue distribution, highly enriched in adult cerebellum, with a low level expression in other brain regions.

The protein resides in the endoplasmic reticulum membrane. It catalyses the reaction [protein]-C-terminal S-[(2E,6E)-farnesyl]-L-cysteine + S-adenosyl-L-methionine = [protein]-C-terminal S-[(2E,6E)-farnesyl]-L-cysteine methyl ester + S-adenosyl-L-homocysteine. In terms of biological role, catalyzes the post-translational methylation of isoprenylated C-terminal cysteine residues. This Mus musculus (Mouse) protein is Protein-S-isoprenylcysteine O-methyltransferase (Icmt).